The following is a 333-amino-acid chain: 4-hydroxy-3-methylbut-2-enyl diphosphate reductase (333 aa).

A [4Fe-4S] cluster-binding site is contributed by Cys34. (2E)-4-hydroxy-3-methylbut-2-enyl diphosphate-binding residues include His63 and His96. Dimethylallyl diphosphate contacts are provided by His63 and His96. Residues His63 and His96 each coordinate isopentenyl diphosphate. Cys118 serves as a coordination point for [4Fe-4S] cluster. Residue His146 coordinates (2E)-4-hydroxy-3-methylbut-2-enyl diphosphate. Residue His146 participates in dimethylallyl diphosphate binding. His146 provides a ligand contact to isopentenyl diphosphate. Catalysis depends on Glu148, which acts as the Proton donor. Thr186 lines the (2E)-4-hydroxy-3-methylbut-2-enyl diphosphate pocket. Cys216 is a [4Fe-4S] cluster binding site. (2E)-4-hydroxy-3-methylbut-2-enyl diphosphate contacts are provided by Ser244, Ser245, Asn246, and Ser289. Dimethylallyl diphosphate is bound by residues Ser244, Ser245, Asn246, and Ser289. Residues Ser244, Ser245, Asn246, and Ser289 each coordinate isopentenyl diphosphate.

It belongs to the IspH family. Requires [4Fe-4S] cluster as cofactor.

The enzyme catalyses isopentenyl diphosphate + 2 oxidized [2Fe-2S]-[ferredoxin] + H2O = (2E)-4-hydroxy-3-methylbut-2-enyl diphosphate + 2 reduced [2Fe-2S]-[ferredoxin] + 2 H(+). It carries out the reaction dimethylallyl diphosphate + 2 oxidized [2Fe-2S]-[ferredoxin] + H2O = (2E)-4-hydroxy-3-methylbut-2-enyl diphosphate + 2 reduced [2Fe-2S]-[ferredoxin] + 2 H(+). It functions in the pathway isoprenoid biosynthesis; dimethylallyl diphosphate biosynthesis; dimethylallyl diphosphate from (2E)-4-hydroxy-3-methylbutenyl diphosphate: step 1/1. It participates in isoprenoid biosynthesis; isopentenyl diphosphate biosynthesis via DXP pathway; isopentenyl diphosphate from 1-deoxy-D-xylulose 5-phosphate: step 6/6. In terms of biological role, catalyzes the conversion of 1-hydroxy-2-methyl-2-(E)-butenyl 4-diphosphate (HMBPP) into a mixture of isopentenyl diphosphate (IPP) and dimethylallyl diphosphate (DMAPP). Acts in the terminal step of the DOXP/MEP pathway for isoprenoid precursor biosynthesis. The polypeptide is 4-hydroxy-3-methylbut-2-enyl diphosphate reductase (Mycobacterium sp. (strain KMS)).